Here is a 186-residue protein sequence, read N- to C-terminus: Glutathione peroxidase 7 (186 aa).

A signal peptide spans 1–18; that stretch reads MVAAVATAWLLLWAAACA. Residue C56 is part of the active site.

This sequence belongs to the glutathione peroxidase family.

Its subcellular location is the secreted. The enzyme catalyses 2 glutathione + H2O2 = glutathione disulfide + 2 H2O. Functionally, it protects esophageal epithelia from hydrogen peroxide-induced oxidative stress. It suppresses acidic bile acid-induced reactive oxygen species (ROS) and protects against oxidative DNA damage and double-strand breaks. The polypeptide is Glutathione peroxidase 7 (Gpx7) (Mus musculus (Mouse)).